The primary structure comprises 367 residues: Popeye domain-containing protein 2 (367 aa).

Residue Asn-4 is glycosylated (N-linked (GlcNAc...) asparagine). The next 2 membrane-spanning stretches (helical) occupy residues Phe-36–Ile-56 and Ile-77–Tyr-97. 2 disordered regions span residues Pro-273–Ala-292 and Ala-312–Leu-367. Acidic residues predominate over residues Gly-278–Leu-290. A compositionally biased stretch (polar residues) spans Pro-344–Gln-356. Residue Asn-347 is glycosylated (N-linked (GlcNAc...) asparagine). At Thr-364 the chain carries Phosphothreonine.

The protein belongs to the popeye family. Expressed in the developing and adult heart, with high expression levels in the sinus and atrioventricular nodes. Also expressed in the bladder and skeletal muscle.

It is found in the membrane. The protein resides in the cell membrane. It localises to the sarcolemma. Functionally, important for the maintenance of cardiac function. Plays a regulatory function in heart rate dynamics mediated, at least in part, through cAMP-binding and, probably, by increasing cell surface expression of the potassium channel KCNK2 and enhancing current density. This is Popeye domain-containing protein 2 (Popdc2) from Mus musculus (Mouse).